The following is a 524-amino-acid chain: Apoptosis inhibitor 5-A (524 aa).

The tract at residues methionine 1 to phenylalanine 360 is ARM-like and Heat-like helical repeats. Positions threonine 440–tyrosine 524 are disordered. Positions lysine 455 to arginine 476 match the Nuclear localization signal motif. Over residues glycine 503–glycine 516 the composition is skewed to gly residues.

This sequence belongs to the API5 family. Monomer.

Its subcellular location is the nucleus. May be an antiapoptotic factor. The chain is Apoptosis inhibitor 5-A (api5-a) from Xenopus laevis (African clawed frog).